The following is a 341-amino-acid chain: S-adenosylmethionine:tRNA ribosyltransferase-isomerase (341 aa).

It belongs to the QueA family. Monomer.

It localises to the cytoplasm. The catalysed reaction is 7-aminomethyl-7-carbaguanosine(34) in tRNA + S-adenosyl-L-methionine = epoxyqueuosine(34) in tRNA + adenine + L-methionine + 2 H(+). It functions in the pathway tRNA modification; tRNA-queuosine biosynthesis. Functionally, transfers and isomerizes the ribose moiety from AdoMet to the 7-aminomethyl group of 7-deazaguanine (preQ1-tRNA) to give epoxyqueuosine (oQ-tRNA). This is S-adenosylmethionine:tRNA ribosyltransferase-isomerase from Chlorobium luteolum (strain DSM 273 / BCRC 81028 / 2530) (Pelodictyon luteolum).